The following is a 123-amino-acid chain: Small ribosomal subunit protein uS13 (123 aa).

Belongs to the universal ribosomal protein uS13 family. In terms of assembly, part of the 30S ribosomal subunit. Forms a loose heterodimer with protein S19. Forms two bridges to the 50S subunit in the 70S ribosome.

Functionally, located at the top of the head of the 30S subunit, it contacts several helices of the 16S rRNA. In the 70S ribosome it contacts the 23S rRNA (bridge B1a) and protein L5 of the 50S subunit (bridge B1b), connecting the 2 subunits; these bridges are implicated in subunit movement. Contacts the tRNAs in the A and P-sites. This is Small ribosomal subunit protein uS13 from Anaplasma marginale (strain St. Maries).